Consider the following 524-residue polypeptide: Probable 1,3-beta-glucanosyltransferase GAS3 (524 aa).

A signal peptide spans 1-21 (MQLSKSILLAALAATPSLVNA). Cys78 and Cys107 are disulfide-bonded. (1,3-beta-D-glucosyl)n contacts are provided by Tyr96, Asn168, and Glu169. Residue Glu169 is the Proton donor of the active site. Asn201 carries N-linked (GlcNAc...) asparagine glycosylation. The (1,3-beta-D-glucosyl)n site is built by Asp212 and Arg217. Cystine bridges form between Cys226/Cys369 and Cys254/Cys286. N-linked (GlcNAc...) asparagine glycosylation is present at Asn269. Glu283 (nucleophile) is an active-site residue. Tyr315 contributes to the (1,3-beta-D-glucosyl)n binding site. Residues Asn350, Asn385, Asn404, and Asn422 are each glycosylated (N-linked (GlcNAc...) asparagine). The tract at residues 461–498 (TSQSSSRSLTSSTSPSSSTGSSSSTGSSSASSSSKSKG) is disordered. Gly498 carries the GPI-anchor amidated glycine lipid modification. Residues 499-524 (VGNIVNVSFSQSGYLALFAGLISALL) constitute a propeptide, removed in mature form.

The protein belongs to the glycosyl hydrolase 72 family. Post-translationally, the GPI-anchor is attached to the protein in the endoplasmic reticulum and serves to target the protein to the cell surface. There, the glucosamine-inositol phospholipid moiety is cleaved off and the GPI-modified mannoprotein is covalently attached via its lipidless GPI glycan remnant to the 1,6-beta-glucan of the outer cell wall layer. In terms of processing, N-glycosylated.

The protein localises to the secreted. Its subcellular location is the cell wall. The protein resides in the membrane. In terms of biological role, splits internally a 1,3-beta-glucan molecule and transfers the newly generated reducing end (the donor) to the non-reducing end of another 1,3-beta-glucan molecule (the acceptor) forming a 1,3-beta linkage, resulting in the elongation of 1,3-beta-glucan chains in the cell wall. Involved in cell wall biosynthesis and morphogenesis. This chain is Probable 1,3-beta-glucanosyltransferase GAS3 (GAS3), found in Saccharomyces cerevisiae (strain ATCC 204508 / S288c) (Baker's yeast).